The sequence spans 75 residues: CLAVATA3/ESR (CLE)-related protein 2 (75 aa).

The first 22 residues, 1 to 22, serve as a signal peptide directing secretion; sequence MAKLSFTFCFLLFLLLSSIAAG. The segment at 40–75 is disordered; that stretch reads PSIEATSPTVEDDQAAGSHGKSPERLSPGGPDPQHH. Residues P67 and P70 each carry the hydroxyproline modification. O-linked (Ara...) hydroxyproline glycosylation occurs at P70.

The protein belongs to the CLV3/ESR signal peptide family. As to quaternary structure, interacts with the extracellular leucine-rich repeat region of CLV1. Post-translationally, the O-glycosylation (arabinosylation) of the hydroxyproline Pro-70 enhances binding affinity of the CLE2p peptide for its receptor. As to expression, mostly expressed in roots and seedlings, and, to a lower extent, in apex.

The protein localises to the secreted. It is found in the extracellular space. Functionally, extracellular signal peptide that regulates cell fate. May act with CLV1 as a ligand-receptor pair in a signal transduction pathway, coordinating growth between adjacent meristematic regions. The protein is CLAVATA3/ESR (CLE)-related protein 2 of Arabidopsis thaliana (Mouse-ear cress).